The primary structure comprises 216 residues: MKLFIDTANVDDIREVASWGVLSGVTTNPSLVAKEGRDFMQVLREILEIVDGPISAEVISLQADDMVEEARQYYELHKNIVIKLPMTAEGLKACARLSAKGVRCNMTLIFSPNQALLCARAGAAFVSPFVGRLDDISTDGIQLIRDTAEIFDLHGIDTEIIAASIRTPGQVVEAAKAGAHIATIPPKVFHQMLKHPLTDSGIERFLKDWEAAKGRV.

Lys83 serves as the catalytic Schiff-base intermediate with substrate.

The protein belongs to the transaldolase family. Type 3B subfamily.

The protein localises to the cytoplasm. The enzyme catalyses D-sedoheptulose 7-phosphate + D-glyceraldehyde 3-phosphate = D-erythrose 4-phosphate + beta-D-fructose 6-phosphate. Its pathway is carbohydrate degradation; pentose phosphate pathway; D-glyceraldehyde 3-phosphate and beta-D-fructose 6-phosphate from D-ribose 5-phosphate and D-xylulose 5-phosphate (non-oxidative stage): step 2/3. Transaldolase is important for the balance of metabolites in the pentose-phosphate pathway. This chain is Probable transaldolase, found in Symbiobacterium thermophilum (strain DSM 24528 / JCM 14929 / IAM 14863 / T).